Here is a 446-residue protein sequence, read N- to C-terminus: Putative F-box protein At1g32660 (446 aa).

Basic and acidic residues-rich tracts occupy residues 1 to 12 (MKRKDDDQEDRS) and 43 to 57 (NKLEEDEKEDTNPSK). Positions 1 to 57 (MKRKDDDQEDRSCSSASKLDPIPLDLKMATVPTKSHMKKSHQNKLEEDEKEDTNPSK) are disordered. The 51-residue stretch at 57–107 (KLELDSLPLDLKMAILTRIPAKSLMKLRCVSKMWSSIIRSRGFIDSYYAIS) folds into the F-box domain.

The sequence is that of Putative F-box protein At1g32660 from Arabidopsis thaliana (Mouse-ear cress).